The chain runs to 288 residues: Bifunctional protein FolD (288 aa).

NADP(+) contacts are provided by residues 166–168 and I232; that span reads GAS.

Belongs to the tetrahydrofolate dehydrogenase/cyclohydrolase family. Homodimer.

The enzyme catalyses (6R)-5,10-methylene-5,6,7,8-tetrahydrofolate + NADP(+) = (6R)-5,10-methenyltetrahydrofolate + NADPH. It catalyses the reaction (6R)-5,10-methenyltetrahydrofolate + H2O = (6R)-10-formyltetrahydrofolate + H(+). Its pathway is one-carbon metabolism; tetrahydrofolate interconversion. In terms of biological role, catalyzes the oxidation of 5,10-methylenetetrahydrofolate to 5,10-methenyltetrahydrofolate and then the hydrolysis of 5,10-methenyltetrahydrofolate to 10-formyltetrahydrofolate. The chain is Bifunctional protein FolD from Yersinia pseudotuberculosis serotype O:1b (strain IP 31758).